A 183-amino-acid chain; its full sequence is ATP-dependent protease subunit HslV (183 aa).

Residue Thr-7 is part of the active site. Na(+) is bound by residues Gly-162, Cys-165, and Thr-168.

This sequence belongs to the peptidase T1B family. HslV subfamily. As to quaternary structure, a double ring-shaped homohexamer of HslV is capped on each side by a ring-shaped HslU homohexamer. The assembly of the HslU/HslV complex is dependent on binding of ATP.

Its subcellular location is the cytoplasm. The enzyme catalyses ATP-dependent cleavage of peptide bonds with broad specificity.. Its activity is regulated as follows. Allosterically activated by HslU binding. Functionally, protease subunit of a proteasome-like degradation complex believed to be a general protein degrading machinery. This is ATP-dependent protease subunit HslV from Alkalilimnicola ehrlichii (strain ATCC BAA-1101 / DSM 17681 / MLHE-1).